Reading from the N-terminus, the 155-residue chain is Aspartate carbamoyltransferase regulatory chain (155 aa).

4 residues coordinate Zn(2+): Cys111, Cys116, Cys137, and Cys140.

The protein belongs to the PyrI family. Contains catalytic and regulatory chains. Zn(2+) serves as cofactor.

Involved in allosteric regulation of aspartate carbamoyltransferase. The polypeptide is Aspartate carbamoyltransferase regulatory chain (Haloarcula marismortui (strain ATCC 43049 / DSM 3752 / JCM 8966 / VKM B-1809) (Halobacterium marismortui)).